A 93-amino-acid polypeptide reads, in one-letter code: MSLVRAHFLVKGFVQGVGFRYFVLRQAAALQLNGWVRNRYNGSVEGVVEGPEAEVKEFLDRCRRGPAWAEVKEVKVQYEEPRGETTFRIRSSV.

Residues 5 to 91 enclose the Acylphosphatase-like domain; it reads RAHFLVKGFV…RGETTFRIRS (87 aa). Catalysis depends on residues arginine 20 and asparagine 38.

The protein belongs to the acylphosphatase family.

It catalyses the reaction an acyl phosphate + H2O = a carboxylate + phosphate + H(+). The chain is Acylphosphatase (acyP) from Moorella thermoacetica (strain ATCC 39073 / JCM 9320).